A 532-amino-acid polypeptide reads, in one-letter code: Apolipoprotein N-acyltransferase (532 aa).

The next 6 helical transmembrane spans lie at 37 to 57 (IFVA…GAIA), 75 to 95 (WWFG…ALLV), 106 to 126 (LAVL…AMIA), 128 to 148 (LLWS…ALAE), 179 to 199 (VIGL…PALL), and 207 to 227 (TGIG…AWTL). Residues 245–494 (VQPSIAQAMK…VGVVDSYLPS (250 aa)) enclose the CN hydrolase domain. Glutamate 289 acts as the Proton acceptor in catalysis. Lysine 353 is a catalytic residue. Cysteine 406 functions as the Nucleophile in the catalytic mechanism. A helical membrane pass occupies residues 505–525 (GWIQTVLILLTLLAASVGLIL).

This sequence belongs to the CN hydrolase family. Apolipoprotein N-acyltransferase subfamily.

It is found in the cell inner membrane. It carries out the reaction N-terminal S-1,2-diacyl-sn-glyceryl-L-cysteinyl-[lipoprotein] + a glycerophospholipid = N-acyl-S-1,2-diacyl-sn-glyceryl-L-cysteinyl-[lipoprotein] + a 2-acyl-sn-glycero-3-phospholipid + H(+). It participates in protein modification; lipoprotein biosynthesis (N-acyl transfer). Catalyzes the phospholipid dependent N-acylation of the N-terminal cysteine of apolipoprotein, the last step in lipoprotein maturation. The protein is Apolipoprotein N-acyltransferase of Brucella suis biovar 1 (strain 1330).